A 294-amino-acid chain; its full sequence is Thymidylate synthase 1/2 (294 aa).

Residues arginine 29 and 154–155 (RR) each bind dUMP. Residue cysteine 174 is the Nucleophile of the active site. Residues 194 to 197 (RSGD), asparagine 205, and 235 to 237 (HVY) contribute to the dUMP site. Aspartate 197 is a (6R)-5,10-methylene-5,6,7,8-tetrahydrofolate binding site.

It belongs to the thymidylate synthase family.

It catalyses the reaction dUMP + (6R)-5,10-methylene-5,6,7,8-tetrahydrofolate = 7,8-dihydrofolate + dTMP. Its pathway is pyrimidine metabolism; dTTP biosynthesis. The protein is Thymidylate synthase 1/2 (TS-1) of Encephalitozoon cuniculi (strain GB-M1) (Microsporidian parasite).